We begin with the raw amino-acid sequence, 350 residues long: Renin receptor (350 aa).

The N-terminal stretch at 1-17 is a signal peptide; the sequence is MAVLVVLLSSLVSSALA. At 18–302 the chain is on the extracellular side; the sequence is NEFSILRSPG…YNLAYKYNLE (285 aa). A helical transmembrane segment spans residues 303–323; it reads YSVVFNLVLWIMTGLALAVII. Topologically, residues 324–350 are cytoplasmic; sequence TSYNIWNMDPGYDSIIYRMTNQKIRMD. A Mediates retrograde transport to the ER motif is present at residues 346–350; the sequence is KIRMD.

As to quaternary structure, interacts with renin. Accessory component of the multisubunit proton-transporting vacuolar (V)-ATPase protein pump. Interacts (via N-terminus) with ATP6AP1 (via N-terminus). Interacts with ATP6V0D1; ATP6V0D1 is a V-ATPase complex subunit and the interaction promotes V-ATPase complex assembly. Interacts with TMEM9; TMEM9 is a V-ATPase assembly regulator and the interaction induces the interaction with ATP6V0D1. Interacts with VMA21 (via N-terminus); VMA21 is a V-ATPase accessory component. Phosphorylated. In terms of processing, proteolytically cleaved by a furin-like convertase in the trans-Golgi network to generate N- and C-terminal fragments. As to expression, expressed in the brain.

The protein resides in the endoplasmic reticulum membrane. It localises to the lysosome membrane. Its subcellular location is the cytoplasmic vesicle. It is found in the autophagosome membrane. The protein localises to the cell projection. The protein resides in the dendritic spine membrane. It localises to the axon. Its subcellular location is the endosome membrane. It is found in the clathrin-coated vesicle membrane. The protein localises to the secretory vesicle. The protein resides in the synaptic vesicle membrane. In terms of biological role, multifunctional protein which functions as a renin, prorenin cellular receptor and is involved in the assembly of the lysosomal proton-transporting V-type ATPase (V-ATPase) and the acidification of the endo-lysosomal system. May mediate renin-dependent cellular responses by activating ERK1 and ERK2. By increasing the catalytic efficiency of renin in AGT/angiotensinogen conversion to angiotensin I, may also play a role in the renin-angiotensin system (RAS). Through its function in V-type ATPase (v-ATPase) assembly and acidification of the lysosome it regulates protein degradation and may control different signaling pathways important for proper brain development, synapse morphology and synaptic transmission. The sequence is that of Renin receptor (Atp6ap2) from Rattus norvegicus (Rat).